The primary structure comprises 352 residues: MDYQVSSPTYDIDYYTSEPCQKINVKQIAARLLPPLYSLVFIFGFVGNILVVLILINCKRLKSMTDIYLLNLAISDLLFLLTVPFWAHYAAAQWDFGNTMCQLLTGLYFIGFFSGIFFIILLTIDRYLAIVHAVFALKARTVTFGVVTSVITWVVAVFASLPGIIFTRSQREGLHYTCSPHFPYSQYQFWKNFQTLKIVILGLVLPLLVMVICYSGILKTLLRCRNEKKRHRAVRLIFTIMIVYFLFWAPYNIVLLLNTFQEFFGLNNCSSSNRLDQAMQVTETLGMTHCCINPIIYAFVGEKFRNYLLVFFQKHIAKRFCKCCSIFQQEASERASSVYTRSTGEQEISVGL.

Over 1–30 (MDYQVSSPTYDIDYYTSEPCQKINVKQIAA) the chain is Extracellular. Y3 carries the sulfotyrosine modification. Residues S6 and S7 are each glycosylated (O-linked (GalNAc...) serine). 3 positions are modified to sulfotyrosine: Y10, Y14, and Y15. Cystine bridges form between C20-C269 and C101-C178. The chain crosses the membrane as a helical span at residues 31–58 (RLLPPLYSLVFIFGFVGNILVVLILINC). Residues 59–68 (KRLKSMTDIY) are Cytoplasmic-facing. The chain crosses the membrane as a helical span at residues 69–89 (LLNLAISDLLFLLTVPFWAHY). Residues 90-102 (AAAQWDFGNTMCQ) lie on the Extracellular side of the membrane. The helical transmembrane segment at 103-124 (LLTGLYFIGFFSGIFFIILLTI) threads the bilayer. Residues 125-141 (DRYLAIVHAVFALKART) lie on the Cytoplasmic side of the membrane. Residues 142–166 (VTFGVVTSVITWVVAVFASLPGIIF) traverse the membrane as a helical segment. At 167-198 (TRSQREGLHYTCSPHFPYSQYQFWKNFQTLKI) the chain is on the extracellular side. The helical transmembrane segment at 199 to 218 (VILGLVLPLLVMVICYSGIL) threads the bilayer. At 219–235 (KTLLRCRNEKKRHRAVR) the chain is on the cytoplasmic side. Residues 236–260 (LIFTIMIVYFLFWAPYNIVLLLNTF) form a helical membrane-spanning segment. Topologically, residues 261-277 (QEFFGLNNCSSSNRLDQ) are extracellular. The helical transmembrane segment at 278-301 (AMQVTETLGMTHCCINPIIYAFVG) threads the bilayer. Residues 302 to 352 (EKFRNYLLVFFQKHIAKRFCKCCSIFQQEASERASSVYTRSTGEQEISVGL) lie on the Cytoplasmic side of the membrane. 3 S-palmitoyl cysteine lipidation sites follow: C321, C323, and C324. A phosphoserine; by BARK1 mark is found at S336, S337, S342, and S349.

Belongs to the G-protein coupled receptor 1 family. Interacts with PRAF2. Efficient ligand binding to CCL3/MIP-1alpha and CCL4/MIP-1beta requires sulfation, O-glycosylation and sialic acid modifications. Glycosylation on Ser-6 is required for efficient binding of CCL4. Interacts with GRK2. Interacts with ARRB1 and ARRB2. Interacts with CNIH4. Interacts with S100A4; this interaction stimulates T-lymphocyte chemotaxis. Sulfated on at least 2 of the N-terminal tyrosines. Sulfation is required for efficient binding of the chemokines, CCL3 and CCL4. In terms of processing, palmitoylation in the C-terminal is important for cell surface expression. Post-translationally, phosphorylation on serine residues in the C-terminal is stimulated by binding CC chemokines especially by APO-RANTES. O-glycosylated, but not N-glycosylated. Ser-6 appears to be the major site even if Ser-7 may be also O-glycosylated. Also sialylated glycans present which contribute to chemokine binding. Thr-16 and Ser-17 may also be glycosylated and, if so, with small moieties such as a T-antigen.

It localises to the cell membrane. Receptor for a number of inflammatory CC-chemokines including CCL3/MIP-1-alpha, CCL4/MIP-1-beta and RANTES and subsequently transduces a signal by increasing the intracellular calcium ion level. May play a role in the control of granulocytic lineage proliferation or differentiation. Participates in T-lymphocyte migration to the infection site by acting as a chemotactic receptor. The chain is C-C chemokine receptor type 5 (CCR5) from Cercocebus atys (Sooty mangabey).